Consider the following 117-residue polypeptide: Big defensin (117 aa).

The N-terminal stretch at 1 to 23 (MKGNIGIAVFYMLLLLLPTDSIG) is a signal peptide. Positions 26–36 (MEEEQEKLFRQ) are excised as a propeptide. 3 cysteine pairs are disulfide-bonded: Cys-83-Cys-113, Cys-90-Cys-108, and Cys-94-Cys-114.

The protein belongs to the big defensin family. As to quaternary structure, interacts with intracellular coagulation inhibitor 1/LICI-1. Expressed in all tissues examined, including hemocytes, heart, hepatopancreas, stomach, intestine and skeletal muscle.

Its subcellular location is the secreted. Its function is as follows. Significantly inhibits the growth of Gram-negative and Gram-positive bacteria and fungi in vitro. The polypeptide is Big defensin (Tachypleus tridentatus (Japanese horseshoe crab)).